We begin with the raw amino-acid sequence, 208 residues long: Small ribosomal subunit protein uS4 (208 aa).

The S4 RNA-binding domain maps to 97-158 (TRLDNVIYRM…RAQKYLCVQE (62 aa)).

The protein belongs to the universal ribosomal protein uS4 family. In terms of assembly, part of the 30S ribosomal subunit. Contacts protein S5. The interaction surface between S4 and S5 is involved in control of translational fidelity.

One of the primary rRNA binding proteins, it binds directly to 16S rRNA where it nucleates assembly of the body of the 30S subunit. Its function is as follows. With S5 and S12 plays an important role in translational accuracy. This Xylella fastidiosa (strain M23) protein is Small ribosomal subunit protein uS4.